The following is a 550-amino-acid chain: Invertase (550 aa).

Residues 1-22 form the signal peptide; it reads MIQLSPLLLLPLFSVFNSIADA. Substrate is bound by residues 39 to 42, Gln-60, and 103 to 104; these read WMND and FS. Residue Asp-42 is part of the active site. Residues Asn-112, Asn-113, Asn-119, and Asn-165 are each glycosylated (N-linked (GlcNAc...) asparagine). A substrate-binding site is contributed by 170 to 171; it reads RD. The N-linked (GlcNAc...) asparagine glycan is linked to Asn-211. Glu-223 serves as a coordination point for substrate. N-linked (GlcNAc...) asparagine glycosylation is present at Asn-237. Trp-313 lines the substrate pocket. 4 N-linked (GlcNAc...) asparagine glycosylation sites follow: Asn-333, Asn-364, Asn-398, and Asn-420.

It belongs to the glycosyl hydrolase 32 family.

The catalysed reaction is Hydrolysis of terminal non-reducing beta-D-fructofuranoside residues in beta-D-fructofuranosides.. This chain is Invertase (INV1), found in Wickerhamomyces anomalus (Yeast).